We begin with the raw amino-acid sequence, 176 residues long: Lipoprotein signal peptidase (176 aa).

Helical transmembrane passes span L26–V46, V57–A77, W82–L102, and F111–I131. Catalysis depends on residues D137 and D155. A helical transmembrane segment spans residues H147–V167.

This sequence belongs to the peptidase A8 family.

Its subcellular location is the cell inner membrane. It carries out the reaction Release of signal peptides from bacterial membrane prolipoproteins. Hydrolyzes -Xaa-Yaa-Zaa-|-(S,diacylglyceryl)Cys-, in which Xaa is hydrophobic (preferably Leu), and Yaa (Ala or Ser) and Zaa (Gly or Ala) have small, neutral side chains.. Its pathway is protein modification; lipoprotein biosynthesis (signal peptide cleavage). In terms of biological role, this protein specifically catalyzes the removal of signal peptides from prolipoproteins. The sequence is that of Lipoprotein signal peptidase from Cupriavidus taiwanensis (strain DSM 17343 / BCRC 17206 / CCUG 44338 / CIP 107171 / LMG 19424 / R1) (Ralstonia taiwanensis (strain LMG 19424)).